Reading from the N-terminus, the 102-residue chain is Small ribosomal subunit protein uS10 (102 aa).

The protein belongs to the universal ribosomal protein uS10 family. Part of the 30S ribosomal subunit.

Involved in the binding of tRNA to the ribosomes. In Salinispora tropica (strain ATCC BAA-916 / DSM 44818 / JCM 13857 / NBRC 105044 / CNB-440), this protein is Small ribosomal subunit protein uS10.